The following is a 127-amino-acid chain: Large ribosomal subunit protein bL17 (127 aa).

The protein belongs to the bacterial ribosomal protein bL17 family. In terms of assembly, part of the 50S ribosomal subunit. Contacts protein L32.

In Leuconostoc mesenteroides subsp. mesenteroides (strain ATCC 8293 / DSM 20343 / BCRC 11652 / CCM 1803 / JCM 6124 / NCDO 523 / NBRC 100496 / NCIMB 8023 / NCTC 12954 / NRRL B-1118 / 37Y), this protein is Large ribosomal subunit protein bL17.